Consider the following 465-residue polypeptide: ATP-dependent protease ATPase subunit HslU (465 aa).

Residues valine 19, 61–66 (GVGKTE), aspartate 277, glutamate 343, and arginine 415 each bind ATP.

This sequence belongs to the ClpX chaperone family. HslU subfamily. As to quaternary structure, a double ring-shaped homohexamer of HslV is capped on each side by a ring-shaped HslU homohexamer. The assembly of the HslU/HslV complex is dependent on binding of ATP.

The protein resides in the cytoplasm. Functionally, ATPase subunit of a proteasome-like degradation complex; this subunit has chaperone activity. The binding of ATP and its subsequent hydrolysis by HslU are essential for unfolding of protein substrates subsequently hydrolyzed by HslV. HslU recognizes the N-terminal part of its protein substrates and unfolds these before they are guided to HslV for hydrolysis. This chain is ATP-dependent protease ATPase subunit HslU, found in Geobacillus sp. (strain WCH70).